Reading from the N-terminus, the 185-residue chain is Photosystem I assembly protein Ycf4 (185 aa).

The next 2 helical transmembrane spans lie at 22-42 (FFFA…GFSS) and 57-77 (IIFV…LFFS).

The protein belongs to the Ycf4 family.

It localises to the plastid. The protein resides in the chloroplast thylakoid membrane. In terms of biological role, seems to be required for the assembly of the photosystem I complex. In Welwitschia mirabilis (Tree tumbo), this protein is Photosystem I assembly protein Ycf4.